The primary structure comprises 254 residues: Trypsin (254 aa).

An N-terminal signal peptide occupies residues 1-16 (MLRFIAVFALVNCALA). A propeptide spans 17-26 (GTLPNDLDGR) (activation peptide). The Peptidase S1 domain occupies 27–252 (IVNGVDTTIE…VRSWIEKTAK (226 aa)). Cys-53 and Cys-69 are disulfide-bonded. Active-site charge relay system residues include His-68 and Asp-113. Disulfide bonds link Cys-154–Cys-158, Cys-178–Cys-195, and Cys-204–Cys-228. Ser-208 (charge relay system) is an active-site residue.

This sequence belongs to the peptidase S1 family.

The protein resides in the secreted. Its subcellular location is the extracellular space. It catalyses the reaction Preferential cleavage: Arg-|-Xaa, Lys-|-Xaa.. Its function is as follows. Involved in digestion of a protein meal. This chain is Trypsin, found in Sarcophaga bullata (Grey flesh fly).